Reading from the N-terminus, the 274-residue chain is Cell division protein FtsQ (274 aa).

Residues 1-24 form a disordered region; sequence MRDLHAKKQRVPHNRVKKPPKERK. Residues 1 to 33 are Cytoplasmic-facing; sequence MRDLHAKKQRVPHNRVKKPPKERKPINWGPILK. Positions 7–21 are enriched in basic residues; that stretch reads KKQRVPHNRVKKPPK. A helical transmembrane segment spans residues 34 to 56; the sequence is FASRGFGGAALCAGLGFGGWQLY. Topologically, residues 57-274 are periplasmic; that stretch reads NLVSRTTLLR…YADKIIVKKV (218 aa). In terms of domain architecture, POTRA spans 65 to 133; sequence LRLEAIEVSP…HTLSITVSER (69 aa).

The protein belongs to the FtsQ/DivIB family. FtsQ subfamily.

The protein localises to the cell inner membrane. Functionally, essential cell division protein. In Geobacter sp. (strain M21), this protein is Cell division protein FtsQ.